A 141-amino-acid chain; its full sequence is Cystatin (141 aa).

The N-terminal stretch at 1-26 (MVHFQLPVAAPLCLLCALLLLPSATM) is a signal peptide. The region spanning 29–129 (GGLSPRSVSD…CHFQVWSRPW (101 aa)) is the Cystatin domain. Residues 73 to 77 (QVVAG) carry the Secondary area of contact motif. Cystine bridges form between C91/C107 and C120/C140.

It belongs to the cystatin family. As to expression, expressed at a low level by the venom gland (at protein level).

The protein resides in the secreted. Functionally, inhibits various C1 cysteine proteases including cathepsin L, papain and cathepsin B. This protein has no toxic activity and its function in the venom is unknown. It may play a role as a housekeeping or regulatory protein. The protein is Cystatin of Naja kaouthia (Monocled cobra).